Here is a 111-residue protein sequence, read N- to C-terminus: Disintegrin subunit alpha (111 aa).

Positions 1-20 (MIQVLLVTICLAVFPYQGSS) are cleaved as a signal peptide. Residues 21–44 (IILESGNVNDYEVVYPRKITPLPK) constitute a propeptide that is removed on maturation. The Disintegrin domain occupies 45–111 (GAVQPKNPCC…GDCPRKHFYA (67 aa)). 4 disulfides stabilise this stretch: C53–C76, C67–C73, C72–C97, and C85–C104. The Cell attachment site motif lies at 89-91 (RGD). A propeptide spanning residues 110–111 (YA) is cleaved from the precursor.

It belongs to the disintegrin family. Dimeric disintegrin subfamily. As to quaternary structure, heterodimer with subunit beta; disulfide-linked. Expressed by the venom gland.

The protein localises to the secreted. Functionally, acts by binding to alpha-IIb/beta-3 (ITGA2B/ITGB3) on the platelet surface and inhibits both ADP-induced platelet aggregation and platelet aggregate dissociation in human platelet-rich plasma. The protein is Disintegrin subunit alpha of Agkistrodon piscivorus leucostoma (Western cottonmouth).